Here is a 424-residue protein sequence, read N- to C-terminus: Inhibin beta A chain (424 aa).

Residues 1 to 20 form the signal peptide; that stretch reads MPLLWLRGFLLASCWIIVRS. A propeptide spanning residues 21–308 is cleaved from the precursor; that stretch reads SPTPGSEGPG…EDHPHRRRRR (288 aa). Asparagine 165 carries N-linked (GlcNAc...) asparagine glycosylation. Residues 257–288 are disordered; it reads KKKKKEEEGEGKKKDGGDGGAGADEDKEQSHR. Residues 261–273 show a composition bias toward basic and acidic residues; sequence KEEEGEGKKKDGG. Intrachain disulfides connect cysteine 312–cysteine 320, cysteine 319–cysteine 389, cysteine 348–cysteine 421, and cysteine 352–cysteine 423.

Belongs to the TGF-beta family. As to quaternary structure, dimeric, linked by one or more disulfide bonds. Inhibin A is a dimer of alpha/INHA and beta-A/INHBA. Activin A is a homodimer of beta-A/INHBA. Activin AB is a dimer of beta-A/INHBA and beta-B/INHBB. Interacts with FST and FSTL3; these interactions prevent activin A interaction to its type II receptor. Activin A interacts with ACVR2A. Activin A interacts with BMPR2. Inhibin A interacts with ACVR1; this interaction creates a non-signaling complex (NSC) that inhibits ACVR1-mediated BMP signaling. Inhibin A interacts with ACVR2A.

It localises to the secreted. In terms of biological role, inhibins/activins are involved in regulating a number of diverse functions such as hypothalamic and pituitary hormone secretion, gonadal hormone secretion, germ cell development and maturation, erythroid differentiation, insulin secretion, nerve cell survival, embryonic axial development or bone growth, depending on their subunit composition. Functionally, activin A is a homodimer of INHBA that plays a role in several essential biological processes including embryonic development, stem cell maintenance and differentiation, haematopoiesis, cell proliferation and tissue fibrosis. Signals through type I (such as ACVR1B or ACVR1C) and type II receptors (such as ACVR2A, ACVR2B or BMPR2) which, upon ligand binding, phosphorylate SMAD2 and SMAD3 intracellular signaling mediators that form a complex with SMAD4, translocate to the nucleus and modulate gene expression. Can also activate alternative non-canonical intracellular signaling pathways including the p38 MAPK, extracellular signal-regulated kinases 1/2 (ERK1/2) and c-Jun N-terminal kinases (JNKs) to modulate cell migration and differentiation. Alternatively, promotes osteoblastic differentiation via ACVRL1-SMAD1/5/9 pathway. In addition, can engage the type I receptor ACVR1 to form an ACVR1-activin A-type II receptor non-signaling complex (NSC) that renders receptors unavailable for engagement with BMPs, hence resulting in an apparent inhibition of ACVR1-mediated BMP signaling. Its function is as follows. Inhibin A is a dimer of alpha/INHA and beta-A/INHBA that functions as a feedback regulator in the hypothalamic-pituitary-gonadal (HPG) axis. Inhibits the secretion of FSH from the anterior pituitary gland by acting on pituitary gonadotrope cells. Antagonizes activin A by binding to the proteoglycan, betaglycan, and forming a stable complex with and, thereby, sequestering type II activin receptors while excluding type I receptor. This Felis catus (Cat) protein is Inhibin beta A chain (INHBA).